A 98-amino-acid polypeptide reads, in one-letter code: NADH-ubiquinone oxidoreductase chain 4L (98 aa).

3 consecutive transmembrane segments (helical) span residues 1–21 (MSIV…GTLL), 29–49 (SLMC…LISL), and 59–79 (VPLI…ALLV).

The protein belongs to the complex I subunit 4L family. Core subunit of respiratory chain NADH dehydrogenase (Complex I) which is composed of 45 different subunits.

The protein localises to the mitochondrion inner membrane. The catalysed reaction is a ubiquinone + NADH + 5 H(+)(in) = a ubiquinol + NAD(+) + 4 H(+)(out). In terms of biological role, core subunit of the mitochondrial membrane respiratory chain NADH dehydrogenase (Complex I) which catalyzes electron transfer from NADH through the respiratory chain, using ubiquinone as an electron acceptor. Part of the enzyme membrane arm which is embedded in the lipid bilayer and involved in proton translocation. This chain is NADH-ubiquinone oxidoreductase chain 4L (MT-ND4L), found in Hemiechinus auritus (Long-eared hedgehog).